Reading from the N-terminus, the 197-residue chain is Large ribosomal subunit protein uL18 (197 aa).

Belongs to the universal ribosomal protein uL18 family. Part of the 50S ribosomal subunit. Contacts the 5S and 23S rRNAs.

In terms of biological role, this is one of the proteins that bind and probably mediate the attachment of the 5S RNA into the large ribosomal subunit, where it forms part of the central protuberance. In Sulfolobus acidocaldarius (strain ATCC 33909 / DSM 639 / JCM 8929 / NBRC 15157 / NCIMB 11770), this protein is Large ribosomal subunit protein uL18.